The chain runs to 101 residues: Small ribosomal subunit protein uS14 (101 aa).

Residues 51–72 (LPRDSSPSRQRNPCRQTGRPHG) form a disordered region. A compositionally biased stretch (polar residues) spans 52 to 65 (PRDSSPSRQRNPCR).

Belongs to the universal ribosomal protein uS14 family. In terms of assembly, part of the 30S ribosomal subunit. Contacts proteins S3 and S10.

Functionally, binds 16S rRNA, required for the assembly of 30S particles and may also be responsible for determining the conformation of the 16S rRNA at the A site. This is Small ribosomal subunit protein uS14 from Buchnera aphidicola subsp. Acyrthosiphon kondoi (Acyrthosiphon kondoi symbiotic bacterium).